Here is a 209-residue protein sequence, read N- to C-terminus: Uracil phosphoribosyltransferase (209 aa).

5-phospho-alpha-D-ribose 1-diphosphate-binding positions include Arg-79, Arg-104, and 131–139 (DPMLATGGS). Uracil contacts are provided by residues Ile-194 and 199 to 201 (GDA). Asp-200 is a 5-phospho-alpha-D-ribose 1-diphosphate binding site.

The protein belongs to the UPRTase family. The cofactor is Mg(2+).

It catalyses the reaction UMP + diphosphate = 5-phospho-alpha-D-ribose 1-diphosphate + uracil. The protein operates within pyrimidine metabolism; UMP biosynthesis via salvage pathway; UMP from uracil: step 1/1. Its activity is regulated as follows. Allosterically activated by GTP. Functionally, catalyzes the conversion of uracil and 5-phospho-alpha-D-ribose 1-diphosphate (PRPP) to UMP and diphosphate. This is Uracil phosphoribosyltransferase from Streptococcus pneumoniae (strain ATCC BAA-255 / R6).